We begin with the raw amino-acid sequence, 190 residues long: Putative histone H1.6 (190 aa).

The tract at residues Met1 to Val29 is disordered. Ser2 carries the N-acetylserine modification. Residues Thr9–Val29 are compositionally biased toward low complexity. In terms of domain architecture, H15 spans Ala34–Glu110. Residues Lys141–Ala190 form a disordered region. Residues Lys148 to Lys183 show a composition bias toward basic residues.

It belongs to the histone H1/H5 family.

Its subcellular location is the nucleus. It is found in the chromosome. Its function is as follows. Histones H1 are necessary for the condensation of nucleosome chains into higher-order structures. The polypeptide is Putative histone H1.6 (hil-6) (Caenorhabditis elegans).